A 530-amino-acid polypeptide reads, in one-letter code: Bifunctional purine biosynthesis protein PurH (530 aa).

An MGS-like domain is found at 1-148 (MNNARPIHRA…KNHKDVAIVV (148 aa)).

This sequence belongs to the PurH family.

It carries out the reaction (6R)-10-formyltetrahydrofolate + 5-amino-1-(5-phospho-beta-D-ribosyl)imidazole-4-carboxamide = 5-formamido-1-(5-phospho-D-ribosyl)imidazole-4-carboxamide + (6S)-5,6,7,8-tetrahydrofolate. The enzyme catalyses IMP + H2O = 5-formamido-1-(5-phospho-D-ribosyl)imidazole-4-carboxamide. Its pathway is purine metabolism; IMP biosynthesis via de novo pathway; 5-formamido-1-(5-phospho-D-ribosyl)imidazole-4-carboxamide from 5-amino-1-(5-phospho-D-ribosyl)imidazole-4-carboxamide (10-formyl THF route): step 1/1. The protein operates within purine metabolism; IMP biosynthesis via de novo pathway; IMP from 5-formamido-1-(5-phospho-D-ribosyl)imidazole-4-carboxamide: step 1/1. This chain is Bifunctional purine biosynthesis protein PurH, found in Vibrio cholerae serotype O1 (strain ATCC 39541 / Classical Ogawa 395 / O395).